The chain runs to 424 residues: Enolase (424 aa).

Residue glutamine 165 participates in (2R)-2-phosphoglycerate binding. Glutamate 207 serves as the catalytic Proton donor. 3 residues coordinate Mg(2+): aspartate 244, glutamate 283, and aspartate 310. Positions 335, 364, 365, and 386 each coordinate (2R)-2-phosphoglycerate. The active-site Proton acceptor is the lysine 335.

This sequence belongs to the enolase family. Mg(2+) is required as a cofactor.

The protein localises to the cytoplasm. Its subcellular location is the secreted. It is found in the cell surface. It carries out the reaction (2R)-2-phosphoglycerate = phosphoenolpyruvate + H2O. It participates in carbohydrate degradation; glycolysis; pyruvate from D-glyceraldehyde 3-phosphate: step 4/5. Catalyzes the reversible conversion of 2-phosphoglycerate (2-PG) into phosphoenolpyruvate (PEP). It is essential for the degradation of carbohydrates via glycolysis. The sequence is that of Enolase from Chlamydia muridarum (strain MoPn / Nigg).